The sequence spans 488 residues: UDP-N-acetylmuramate--L-alanine ligase (488 aa).

Glycine 129 to threonine 135 is a binding site for ATP.

It belongs to the MurCDEF family.

It is found in the cytoplasm. The enzyme catalyses UDP-N-acetyl-alpha-D-muramate + L-alanine + ATP = UDP-N-acetyl-alpha-D-muramoyl-L-alanine + ADP + phosphate + H(+). It functions in the pathway cell wall biogenesis; peptidoglycan biosynthesis. Functionally, cell wall formation. This Prochlorococcus marinus (strain MIT 9313) protein is UDP-N-acetylmuramate--L-alanine ligase.